The chain runs to 1040 residues: V(D)J recombination-activating protein 1 (1040 aa).

Positions 39-53 are enriched in basic and acidic residues; it reads EKAPEEAQKEKDSSE. The interval 39 to 71 is disordered; it reads EKAPEEAQKEKDSSEGKPYLEQSPVVPEKPGGQ. A Glycyl lysine isopeptide (Lys-Gly) (interchain with G-Cter in ubiquitin) cross-link involves residue lysine 233. Residues cysteine 266, histidine 270, cysteine 290, cysteine 293, histidine 295, cysteine 305, histidine 307, cysteine 310, cysteine 313, cysteine 325, cysteine 328, cysteine 355, cysteine 360, histidine 372, and histidine 376 each coordinate Zn(2+). Residues 290-329 form an RING-type zinc finger; it reads CQICEHILADPVETSCKHLFCRICILRCLKVMGSYCPSCR. Residues 351–380 form an RAG1-type zinc finger; it reads LMVKCPAQDCNEEVSLEKYNHHVSSHKESK. Residues 389–456 constitute a DNA-binding region (NBD); the sequence is GGRPRQHLLS…QADELEAIMQ (68 aa). Aspartate 600, aspartate 708, and glutamate 962 together coordinate a divalent metal cation.

The protein belongs to the RAG1 family. Homodimer. Component of the RAG complex composed of core components RAG1 and RAG2, and associated component HMGB1 or HMGB2. Interacts with DCAF1, leading to recruitment of the CUL4A-RBX1-DDB1-DCAF1/VPRBP complex to ubiquitinate proteins and limit error-prone repair during V(D)J recombination. Mg(2+) is required as a cofactor. Requires Mn(2+) as cofactor. In terms of processing, autoubiquitinated in the presence of CDC34/UBCH3. In terms of tissue distribution, maturing lymphoid cells and central nervous system.

It localises to the nucleus. The catalysed reaction is S-ubiquitinyl-[E2 ubiquitin-conjugating enzyme]-L-cysteine + [acceptor protein]-L-lysine = [E2 ubiquitin-conjugating enzyme]-L-cysteine + N(6)-ubiquitinyl-[acceptor protein]-L-lysine.. Functionally, catalytic component of the RAG complex, a multiprotein complex that mediates the DNA cleavage phase during V(D)J recombination. V(D)J recombination assembles a diverse repertoire of immunoglobulin and T-cell receptor genes in developing B and T-lymphocytes through rearrangement of different V (variable), in some cases D (diversity), and J (joining) gene segments. In the RAG complex, RAG1 mediates the DNA-binding to the conserved recombination signal sequences (RSS) and catalyzes the DNA cleavage activities by introducing a double-strand break between the RSS and the adjacent coding segment. RAG2 is not a catalytic component but is required for all known catalytic activities. DNA cleavage occurs in 2 steps: a first nick is introduced in the top strand immediately upstream of the heptamer, generating a 3'-hydroxyl group that can attack the phosphodiester bond on the opposite strand in a direct transesterification reaction, thereby creating 4 DNA ends: 2 hairpin coding ends and 2 blunt, 5'-phosphorylated ends. The chromatin structure plays an essential role in the V(D)J recombination reactions and the presence of histone H3 trimethylated at 'Lys-4' (H3K4me3) stimulates both the nicking and haipinning steps. The RAG complex also plays a role in pre-B cell allelic exclusion, a process leading to expression of a single immunoglobulin heavy chain allele to enforce clonality and monospecific recognition by the B-cell antigen receptor (BCR) expressed on individual B-lymphocytes. The introduction of DNA breaks by the RAG complex on one immunoglobulin allele induces ATM-dependent repositioning of the other allele to pericentromeric heterochromatin, preventing accessibility to the RAG complex and recombination of the second allele. In addition to its endonuclease activity, RAG1 also acts as an E3 ubiquitin-protein ligase that mediates monoubiquitination of histone H3. Histone H3 monoubiquitination is required for the joining step of V(D)J recombination. Mediates polyubiquitination of KPNA1. The protein is V(D)J recombination-activating protein 1 (Rag1) of Mus musculus (Mouse).